A 166-amino-acid chain; its full sequence is UPF0336 protein Mb0656 (166 aa).

The protein belongs to the UPF0336 family.

This is UPF0336 protein Mb0656 from Mycobacterium bovis (strain ATCC BAA-935 / AF2122/97).